The primary structure comprises 631 residues: DNA mismatch repair protein MutL (631 aa).

The protein belongs to the DNA mismatch repair MutL/HexB family.

Functionally, this protein is involved in the repair of mismatches in DNA. It is required for dam-dependent methyl-directed DNA mismatch repair. May act as a 'molecular matchmaker', a protein that promotes the formation of a stable complex between two or more DNA-binding proteins in an ATP-dependent manner without itself being part of a final effector complex. The protein is DNA mismatch repair protein MutL of Mannheimia succiniciproducens (strain KCTC 0769BP / MBEL55E).